The sequence spans 1254 residues: AF4/FMR2 family member 3 (1254 aa).

Over residues 45–62 the composition is skewed to basic and acidic residues; it reads YEPDRNALRRKERERRSQ. Disordered regions lie at residues 45-90, 139-190, 261-324, 350-534, and 552-752; these read YEPD…GDEL, AESR…AAQQ, RPMD…GENN, EPSK…EGQD, and KTTC…SVGS. Composition is skewed to polar residues over residues 67–76 and 143–158; these read DSGSFNSGYS and AQPQ…SSTP. Residues 359 to 369 are compositionally biased toward polar residues; that stretch reads KDSQLVSSGHS. A compositionally biased stretch (low complexity) spans 406 to 418; the sequence is QQAAQRTALRALA. Polar residues predominate over residues 421-433; that stretch reads SVVQQTNCRGSAP. Residues 441 to 472 are compositionally biased toward low complexity; it reads SSSSGGSSSSSDSESTSGSDSETESSSSSSES. The span at 552 to 561 shows a compositional bias: basic and acidic residues; it reads KTTCKEEQRP. Residues 577-605 are compositionally biased toward low complexity; sequence SPPAAVAVTAAALPPAVPSAPTESAPAPT. The segment covering 615 to 633 has biased composition (basic and acidic residues); the sequence is RRTERTSAGDGANCHRPEE. Low complexity-rich tracts occupy residues 694-704 and 732-749; these read TESSSSSSSSD and AASS…SRAS. A Phosphoserine modification is found at serine 782. A disordered region spans residues 813 to 883; the sequence is PGVLSAPSAK…ASTNNTLSGN (71 aa). Positions 857 to 869 are enriched in basic and acidic residues; the sequence is REIKKVQGRKESA. The span at 873–883 shows a compositional bias: polar residues; that stretch reads AASTNNTLSGN. Position 908 is a phosphoserine (serine 908). Disordered stretches follow at residues 919–991 and 1128–1171; these read ASED…HRDC and AAQA…SGLS. Composition is skewed to polar residues over residues 922-941 and 960-985; these read DLTS…ASSN and ASHN…SPGS. 2 stretches are compositionally biased toward low complexity: residues 1132–1146 and 1154–1171; these read PSPW…GSPS and PASS…SGLS.

Belongs to the AF4 family. As to expression, highest levels found in lymphoid tissues, lower levels in brain and lung.

The protein resides in the nucleus. Functionally, putative transcription activator that may function in lymphoid development and oncogenesis. This chain is AF4/FMR2 family member 3 (Aff3), found in Mus musculus (Mouse).